Here is a 351-residue protein sequence, read N- to C-terminus: DNA polymerase IV (351 aa).

Residues 4-185 (IIHVDMDCFF…LPLAKIPGVG (182 aa)) form the UmuC domain. Mg(2+) is bound by residues Asp8 and Asp103. Glu104 is an active-site residue.

The protein belongs to the DNA polymerase type-Y family. As to quaternary structure, monomer. The cofactor is Mg(2+).

Its subcellular location is the cytoplasm. It catalyses the reaction DNA(n) + a 2'-deoxyribonucleoside 5'-triphosphate = DNA(n+1) + diphosphate. Poorly processive, error-prone DNA polymerase involved in untargeted mutagenesis. Copies undamaged DNA at stalled replication forks, which arise in vivo from mismatched or misaligned primer ends. These misaligned primers can be extended by PolIV. Exhibits no 3'-5' exonuclease (proofreading) activity. May be involved in translesional synthesis, in conjunction with the beta clamp from PolIII. The sequence is that of DNA polymerase IV from Shigella dysenteriae serotype 1 (strain Sd197).